Here is a 362-residue protein sequence, read N- to C-terminus: 3-isopropylmalate dehydrogenase (362 aa).

Positions 97, 107, 135, and 225 each coordinate substrate. Mg(2+) is bound by residues aspartate 225, aspartate 249, and aspartate 253. 283-295 serves as a coordination point for NAD(+); sequence GSAPDIAHKNLAN.

It belongs to the isocitrate and isopropylmalate dehydrogenases family. LeuB type 1 subfamily. Homodimer. Requires Mg(2+) as cofactor. It depends on Mn(2+) as a cofactor.

It is found in the cytoplasm. The enzyme catalyses (2R,3S)-3-isopropylmalate + NAD(+) = 4-methyl-2-oxopentanoate + CO2 + NADH. The protein operates within amino-acid biosynthesis; L-leucine biosynthesis; L-leucine from 3-methyl-2-oxobutanoate: step 3/4. Its function is as follows. Catalyzes the oxidation of 3-carboxy-2-hydroxy-4-methylpentanoate (3-isopropylmalate) to 3-carboxy-4-methyl-2-oxopentanoate. The product decarboxylates to 4-methyl-2 oxopentanoate. This is 3-isopropylmalate dehydrogenase from Prochlorococcus marinus (strain SARG / CCMP1375 / SS120).